A 519-amino-acid chain; its full sequence is Membrane-bound glycerophospholipid O-acyltransferase 2 (519 aa).

Helical transmembrane passes span 22–42, 61–81, 88–108, 184–204, 236–256, and 263–283; these read PIDQ…AVWF, TLLG…HFLV, CIMI…FALG, FMGI…FIEG, LLVC…LPVE, and FQAT…LLAA. Residues Asn341 and His372 contribute to the active site. 3 consecutive transmembrane segments (helical) span residues 365–385, 415–435, and 443–463; these read FFLS…FLTG, LITW…FVLL, and FYSS…LLLP. A disordered region spans residues 497–519; the sequence is FSTMNNVCNQNRDTGSRHSSLTQ.

The protein belongs to the membrane-bound acyltransferase family. In terms of tissue distribution, highly expressed in epididymis, brain, testis, and ovary.

The protein localises to the endoplasmic reticulum membrane. It catalyses the reaction a 1-acyl-sn-glycero-3-phosphocholine + an acyl-CoA = a 1,2-diacyl-sn-glycero-3-phosphocholine + CoA. It carries out the reaction a 1-acyl-sn-glycero-3-phosphoethanolamine + an acyl-CoA = a 1,2-diacyl-sn-glycero-3-phosphoethanolamine + CoA. The enzyme catalyses a 1-O-(1Z-alkenyl)-sn-glycero-3-phosphocholine + (9Z)-octadecenoyl-CoA = 1-O-(1Z)-alkenyl-2-(9Z)-octadecenoyl-sn-glycero-3-phosphocholine + CoA. The catalysed reaction is a 1-O-(1Z-alkenyl)-sn-glycero-3-phosphoethanolamine + (9Z)-octadecenoyl-CoA = 1-O-(1Z)-alkenyl-2-(9Z)-octadecenoyl-sn-glycero-3-phosphoethanolamine + CoA. It catalyses the reaction 1-octadecanoyl-sn-glycero-3-phosphoethanolamine + (9Z)-octadecenoyl-CoA = 1-octadecanoyl-2-(9Z-octadecenoyl)-sn-glycero-3-phosphoethanolamine + CoA. It carries out the reaction 1-octadecanoyl-sn-glycero-3-phosphocholine + (9Z)-octadecenoyl-CoA = 1-octadecanoyl-2-(9Z-octadecenoyl)-sn-glycero-3-phosphocholine + CoA. The enzyme catalyses 1-(9Z-octadecenoyl)-sn-glycero-3-phosphoethanolamine + (9Z)-octadecenoyl-CoA = 1,2-di-(9Z-octadecenoyl)-sn-glycero-3-phosphoethanolamine + CoA. The catalysed reaction is 1-hexadecanoyl-sn-glycero-3-phosphoethanolamine + (9Z)-octadecenoyl-CoA = 1-hexadecanoyl-2-(9Z-octadecenoyl)-sn-glycero-3-phosphoethanolamine + CoA. It catalyses the reaction 1-hexadecanoyl-sn-glycero-3-phosphocholine + (9Z)-octadecenoyl-CoA = 1-hexadecanoyl-2-(9Z-octadecenoyl)-sn-glycero-3-phosphocholine + CoA. It carries out the reaction (9Z)-hexadecenoyl-CoA + 1-hexadecanoyl-sn-glycero-3-phosphocholine = 1-hexadecanoyl-2-(9Z-hexadecenoyl)-sn-glycero-3-phosphocholine + CoA. The enzyme catalyses 1-hexadecanoyl-sn-glycero-3-phosphoethanolamine + (9Z)-hexadecenoyl-CoA = 1-hexadecanoyl-2-(9Z)-hexadecenoyl-sn-glycero-3-phosphoethanolamine + CoA. The catalysed reaction is (9Z,12Z)-octadecadienoyl-CoA + 1-hexadecanoyl-sn-glycero-3-phosphocholine = 1-hexadecanoyl-2-(9Z,12Z-octadecadienoyl)-sn-glycero-3-phosphocholine + CoA. The protein operates within lipid metabolism; phospholipid metabolism. Its activity is regulated as follows. Partially inhibited by thimerosal. Functionally, acyltransferase which catalyzes the transfer of an acyl group from an acyl-CoA to a lysophospholipid leading to the production of a phospholipid and participates in the reacylation step of the phospholipid remodeling pathway also known as the Lands cycle. Catalyzes the acylation of lysophosphatidylcholine (1-acyl-sn-glycero-3-phosphocholine or LPC) and to a lesser extend lysophosphatidylethanolamine (1-acyl-sn-glycero-3-phosphoethanolamine or LPE). Does not acylates lysophosphatidic acid (LPA) and lysophosphatidylserine. Prefers oleoyl-CoA as the acyl donor. May be involved in chondrocyte differentiation. The polypeptide is Membrane-bound glycerophospholipid O-acyltransferase 2 (Mus musculus (Mouse)).